The sequence spans 170 residues: Adenine phosphoribosyltransferase (170 aa).

It belongs to the purine/pyrimidine phosphoribosyltransferase family. In terms of assembly, homodimer.

The protein localises to the cytoplasm. The catalysed reaction is AMP + diphosphate = 5-phospho-alpha-D-ribose 1-diphosphate + adenine. Its pathway is purine metabolism; AMP biosynthesis via salvage pathway; AMP from adenine: step 1/1. Catalyzes a salvage reaction resulting in the formation of AMP, that is energically less costly than de novo synthesis. The sequence is that of Adenine phosphoribosyltransferase from Lactococcus lactis subsp. lactis (strain IL1403) (Streptococcus lactis).